The sequence spans 553 residues: Putative transport protein YidE (553 aa).

Transmembrane regions (helical) follow at residues 4-24 (IALT…IGNV), 28-48 (GIGL…HFVS), 65-85 (FGLI…FFAS), 95-115 (LFAV…HKLF), and 158-178 (MSYA…MWML). RCK C-terminal domains lie at 191–276 (QQHE…VIGQ) and 279–361 (DTSL…VLGN). Transmembrane regions (helical) follow at residues 371–391 (MLPV…PVFV), 393–413 (GFPA…ALIL), 431–448 (NLAL…VVGL), 464–484 (LSWI…VGIL), 493–513 (YLTM…LAFA), and 533–553 (LVMF…WSIG).

The protein belongs to the AAE transporter (TC 2.A.81) family. YidE subfamily.

It localises to the cell membrane. This chain is Putative transport protein YidE, found in Shigella sonnei (strain Ss046).